We begin with the raw amino-acid sequence, 367 residues long: Anhydro-N-acetylmuramic acid kinase (367 aa).

13-20 (GTSMDGAD) contacts ATP.

This sequence belongs to the anhydro-N-acetylmuramic acid kinase family.

It carries out the reaction 1,6-anhydro-N-acetyl-beta-muramate + ATP + H2O = N-acetyl-D-muramate 6-phosphate + ADP + H(+). It functions in the pathway amino-sugar metabolism; 1,6-anhydro-N-acetylmuramate degradation. Its pathway is cell wall biogenesis; peptidoglycan recycling. Catalyzes the specific phosphorylation of 1,6-anhydro-N-acetylmuramic acid (anhMurNAc) with the simultaneous cleavage of the 1,6-anhydro ring, generating MurNAc-6-P. Is required for the utilization of anhMurNAc either imported from the medium or derived from its own cell wall murein, and thus plays a role in cell wall recycling. This is Anhydro-N-acetylmuramic acid kinase from Neisseria meningitidis serogroup A / serotype 4A (strain DSM 15465 / Z2491).